The sequence spans 42 residues: Protein YmiD (42 aa).

The protein is Protein YmiD of Escherichia coli (strain K12).